Here is a 403-residue protein sequence, read N- to C-terminus: Argininosuccinate synthase (403 aa).

ATP is bound by residues Ala10–Ser18 and Ala38. Position 89 (Tyr89) interacts with L-citrulline. Residue Gly119 participates in ATP binding. L-aspartate-binding residues include Thr121, Asn125, and Asp126. Asn125 serves as a coordination point for L-citrulline. The L-citrulline site is built by Arg129, Ser177, Ser186, Glu262, and Tyr274.

Belongs to the argininosuccinate synthase family. Type 1 subfamily. Homotetramer.

It is found in the cytoplasm. The catalysed reaction is L-citrulline + L-aspartate + ATP = 2-(N(omega)-L-arginino)succinate + AMP + diphosphate + H(+). Its pathway is amino-acid biosynthesis; L-arginine biosynthesis; L-arginine from L-ornithine and carbamoyl phosphate: step 2/3. The polypeptide is Argininosuccinate synthase (Parasynechococcus marenigrum (strain WH8102)).